The chain runs to 240 residues: Probable xyloglucan-specific endo-beta-1,4-glucanase A (240 aa).

The signal sequence occupies residues 1–15; it reads MKFLTPLVLSSLASA.

Belongs to the glycosyl hydrolase 12 (cellulase H) family.

It is found in the secreted. It catalyses the reaction xyloglucan + H2O = xyloglucan oligosaccharides.. Its function is as follows. Catalyzes endohydrolysis of 1,4-beta-D-glucosidic linkages in xyloglucan with retention of the beta-configuration of the glycosyl residues. Specific for xyloglucan and does not hydrolyze other cell wall components. The polypeptide is Probable xyloglucan-specific endo-beta-1,4-glucanase A (xgeA) (Aspergillus oryzae (strain ATCC 42149 / RIB 40) (Yellow koji mold)).